A 266-amino-acid polypeptide reads, in one-letter code: Glutamate racemase (266 aa).

Substrate-binding positions include 10–11 (DS) and 42–43 (YG). Cys-73 acts as the Proton donor/acceptor in catalysis. 74–75 (NT) is a substrate binding site. Cys-183 acts as the Proton donor/acceptor in catalysis. 184–185 (TH) is a binding site for substrate.

This sequence belongs to the aspartate/glutamate racemases family.

The catalysed reaction is L-glutamate = D-glutamate. Its pathway is cell wall biogenesis; peptidoglycan biosynthesis. Its function is as follows. Provides the (R)-glutamate required for cell wall biosynthesis. In Lactobacillus johnsonii (strain CNCM I-12250 / La1 / NCC 533), this protein is Glutamate racemase.